Reading from the N-terminus, the 260-residue chain is Carbonic anhydrase 3 (260 aa).

The residue at position 2 (A2) is an N-acetylalanine. The 257-residue stretch at 3–259 folds into the Alpha-carbonic anhydrase domain; the sequence is KEWGYASHNG…INNRVVRASF (257 aa). Residues S29, S43, S48, S50, and S55 each carry the phosphoserine modification. Residues 64 to 67 form an involved in proton transfer region; it reads KTCR. T73 carries the post-translational modification Phosphothreonine. Residues H94, H96, and H119 each contribute to the Zn(2+) site. At Y127 the chain carries Phosphotyrosine. A phosphothreonine mark is found at T129 and T176. C182 and C187 each carry S-glutathionyl cysteine. Residue 198 to 199 participates in substrate binding; the sequence is TT. T216 is modified (phosphothreonine). At S219 the chain carries Phosphoserine.

This sequence belongs to the alpha-carbonic anhydrase family. Zn(2+) serves as cofactor. Post-translationally, S-thiolated both by thiol-disulfide exchange with glutathione disulfide and by oxyradical-initiated S-thiolation with reduced glutathione. In terms of processing, S-glutathionylated in hepatocytes under oxidative stress. As to expression, muscle specific.

The protein localises to the cytoplasm. It catalyses the reaction hydrogencarbonate + H(+) = CO2 + H2O. Its activity is regulated as follows. Activated by proton donors such as imidazole and the dipeptide histidylhistidine. Inhibited by coumarins and sulfonamide derivatives such as acetazolamide. In terms of biological role, reversible hydration of carbon dioxide. The protein is Carbonic anhydrase 3 of Homo sapiens (Human).